Here is a 382-residue protein sequence, read N- to C-terminus: Ribosomal RNA large subunit methyltransferase F (382 aa).

Disordered regions lie at residues 1 to 53 (MTKP…LHRD) and 269 to 288 (NRASKGHKLEPKAPKDKSQL). Basic residues predominate over residues 8–24 (ASRKPVTKSGRNSKRSR). Positions 269–286 (NRASKGHKLEPKAPKDKS) are enriched in basic and acidic residues.

The protein belongs to the methyltransferase superfamily. METTL16/RlmF family.

It is found in the cytoplasm. It catalyses the reaction adenosine(1618) in 23S rRNA + S-adenosyl-L-methionine = N(6)-methyladenosine(1618) in 23S rRNA + S-adenosyl-L-homocysteine + H(+). Its function is as follows. Specifically methylates the adenine in position 1618 of 23S rRNA. This chain is Ribosomal RNA large subunit methyltransferase F, found in Shewanella woodyi (strain ATCC 51908 / MS32).